The following is a 61-amino-acid chain: Large ribosomal subunit protein bL32c (61 aa).

The segment at 37–61 (SRSFSSGNEHPKPKGFSGQQQQTNK) is disordered.

This sequence belongs to the bacterial ribosomal protein bL32 family.

The protein resides in the plastid. Its subcellular location is the chloroplast. The chain is Large ribosomal subunit protein bL32c from Agrostis stolonifera (Creeping bentgrass).